Consider the following 253-residue polypeptide: ER membrane protein complex subunit 3 (253 aa).

A run of 3 helical transmembrane segments spans residues 10–30 (WVLL…QYIM), 126–146 (FIPQ…FILM), and 176–196 (SISW…LIGL).

The protein belongs to the EMC3 family. As to quaternary structure, component of the ER membrane protein complex (EMC), which is composed of EMC1, EMC2, EMC3, EMC4, EMC5 and EMC6.

The protein localises to the endoplasmic reticulum membrane. The EMC seems to be required for efficient folding of proteins in the endoplasmic reticulum (ER). This is ER membrane protein complex subunit 3 (AIM27) from Saccharomyces cerevisiae (strain YJM789) (Baker's yeast).